Here is a 247-residue protein sequence, read N- to C-terminus: 1-(5-phosphoribosyl)-5-[(5-phosphoribosylamino)methylideneamino] imidazole-4-carboxamide isomerase (247 aa).

Catalysis depends on aspartate 8, which acts as the Proton acceptor. Aspartate 130 (proton donor) is an active-site residue.

Belongs to the HisA/HisF family.

It is found in the cytoplasm. The catalysed reaction is 1-(5-phospho-beta-D-ribosyl)-5-[(5-phospho-beta-D-ribosylamino)methylideneamino]imidazole-4-carboxamide = 5-[(5-phospho-1-deoxy-D-ribulos-1-ylimino)methylamino]-1-(5-phospho-beta-D-ribosyl)imidazole-4-carboxamide. It participates in amino-acid biosynthesis; L-histidine biosynthesis; L-histidine from 5-phospho-alpha-D-ribose 1-diphosphate: step 4/9. This chain is 1-(5-phosphoribosyl)-5-[(5-phosphoribosylamino)methylideneamino] imidazole-4-carboxamide isomerase, found in Stutzerimonas stutzeri (strain A1501) (Pseudomonas stutzeri).